Reading from the N-terminus, the 248-residue chain is tRNA (guanine-N(1)-)-methyltransferase (248 aa).

Residues Gly-113 and 133 to 138 (VGDYVL) each bind S-adenosyl-L-methionine.

The protein belongs to the RNA methyltransferase TrmD family. In terms of assembly, homodimer.

Its subcellular location is the cytoplasm. The enzyme catalyses guanosine(37) in tRNA + S-adenosyl-L-methionine = N(1)-methylguanosine(37) in tRNA + S-adenosyl-L-homocysteine + H(+). In terms of biological role, specifically methylates guanosine-37 in various tRNAs. This chain is tRNA (guanine-N(1)-)-methyltransferase, found in Shewanella sp. (strain W3-18-1).